We begin with the raw amino-acid sequence, 163 residues long: Secreted RxLR effector protein 135 (163 aa).

The first 20 residues, 1–20, serve as a signal peptide directing secretion; the sequence is MRRLYLFVLILATFLTTSHG. The short motif at 33–45 is the RxLR-dEER element; it reads RGLQEEAGEDEER. A disordered region spans residues 94 to 127; it reads KNAGKPKRQTPQIAATGPAKPKVQSPEEAAAVPG.

The protein belongs to the RxLR effector family.

The protein localises to the secreted. The protein resides in the host nucleus. It localises to the host cytoplasm. Secreted effector that completely suppresses the host cell death induced by cell death-inducing proteins. This Plasmopara viticola (Downy mildew of grapevine) protein is Secreted RxLR effector protein 135.